We begin with the raw amino-acid sequence, 548 residues long: Medium/long-chain-fatty-acid--CoA/3-oxocholest-4-en-26-oate--CoA ligase (548 aa).

ATP is bound by residues 174 to 182 (TGGTTGFPK), Asp415, Arg430, and Lys521. Basic and acidic residues predominate over residues 520-541 (GKPDYRWAKEQTEARPADDVHA). A disordered region spans residues 520–548 (GKPDYRWAKEQTEARPADDVHAGHVTSGG).

This sequence belongs to the ATP-dependent AMP-binding enzyme family.

The enzyme catalyses a medium-chain fatty acid + ATP + CoA = a medium-chain fatty acyl-CoA + AMP + diphosphate. It catalyses the reaction a long-chain fatty acid + ATP + CoA = a long-chain fatty acyl-CoA + AMP + diphosphate. It carries out the reaction (25S)-3-oxocholest-4-en-26-oate + ATP + CoA = (25S)-3-oxocholest-4-en-26-oyl-CoA + AMP + diphosphate. The protein operates within lipid metabolism; fatty acid biosynthesis. It functions in the pathway steroid metabolism; cholesterol metabolism. Catalyzes the activation of medium/long-chain fatty acids as acyl-coenzyme A (acyl-CoA), which are then transferred to the multifunctional polyketide synthase (PKS) type III for further chain extension. Also involved in the degradation of cholesterol via the degradation of the side chains of C-24 branched-chain sterols. Catalyzes the ATP-dependent CoA thioesterification of the sterol 3-oxocholest-4-en-26-oate to yield 3-oxocholest-4-en-26-oyl-CoA. In Mycobacterium bovis (strain ATCC BAA-935 / AF2122/97), this protein is Medium/long-chain-fatty-acid--CoA/3-oxocholest-4-en-26-oate--CoA ligase.